Consider the following 252-residue polypeptide: C4b-binding protein beta chain (252 aa).

Positions 1 to 17 are cleaved as a signal peptide; that stretch reads MFFWCACCLMVAWRVSA. Sushi domains are found at residues 21-78, 79-136, and 137-193; these read EHCP…ECRL, GHCP…ICKS, and RDCD…VCKL. Intrachain disulfides connect cysteine 23/cysteine 63, cysteine 49/cysteine 76, cysteine 81/cysteine 121, cysteine 107/cysteine 134, cysteine 139/cysteine 179, and cysteine 165/cysteine 191. 5 N-linked (GlcNAc...) asparagine glycosylation sites follow: asparagine 64, asparagine 71, asparagine 98, asparagine 117, and asparagine 154.

Disulfide-linked complex of alpha and beta chains of 3 possible sorts: a 570 kDa complex of 7 alpha chains and 1 beta chain, a 530 kDa homoheptamer of alpha chains or a 500 kDa complex of 6 alpha chains and 1 beta chain. The central body of the alpha chain homomer supports tentacles, each with the binding site for C4b at the end.

The protein localises to the secreted. Its function is as follows. Controls the classical pathway of complement activation. It binds as a cofactor to C3b/C4b inactivator (C3bINA), which then hydrolyzes the complement fragment C4b. It also accelerates the degradation of the C4bC2a complex (C3 convertase) by dissociating the complement fragment C2a. It also interacts with anticoagulant protein S and with serum amyloid P component. The beta chain binds protein S. This chain is C4b-binding protein beta chain (C4BPB), found in Homo sapiens (Human).